A 484-amino-acid chain; its full sequence is MAELRPSGAPGPTAPPAPGPTAPPAFASLFPPGLHAIYGECRRLYPDQPNPLQVTAIVKYWLGGPDPLDYVSMYRNVGSPSANIPEHWHYISFGLSDLYGDNRVHEFTGTDGPSGFGFELTFRLKRETGESAPPTWPAELMQGLARYVFQSENTFCSGDHVSWHSPLDNSESRIQHMLLTEDPQMQPVQTPFGVVTFLQIVGVCTEELHSAQQWNGQGILELLRTVPIAGGPWLITDMRRGETIFEIDPHLQERVDKGIETDGSNLSGVSAKCAWDDLSRPPEDDEDSRSICIGTQPRRLSGKDTEQIRETLRRGLEINSKPVLPPINPQRQNGLAHDRAPSRKDSLESDSSTAIIPHELIRTRQLESVHLKFNQESGALIPLCLRGRLLHGRHFTYKSITGDMAITFVSTGVEGAFATEEHPYAAHGPWLQILLTEEFVEKMLEDLEDLTSPEEFKLPKEYSWPEKKLKVSILPDVVFDSPLH.

The segment at 1 to 24 (MAELRPSGAPGPTAPPAPGPTAPP) is disordered. The span at 12 to 23 (PTAPPAPGPTAP) shows a compositional bias: pro residues. Residue Lys-257 forms a Glycyl lysine isopeptide (Lys-Gly) (interchain with G-Cter in ubiquitin) linkage. The segment at 279 to 360 (SRPPEDDEDS…SSTAIIPHEL (82 aa)) is disordered. At Ser-301 the chain carries Phosphoserine. Position 303 is an N6-acetyllysine (Lys-303). A Glycyl lysine isopeptide (Lys-Gly) (interchain with G-Cter in SUMO2) cross-link involves residue Lys-321. Residues 336 to 347 (AHDRAPSRKDSL) show a composition bias toward basic and acidic residues. Ser-342, Ser-346, and Ser-352 each carry phosphoserine. Thr-353 is modified (phosphothreonine). Phosphoserine is present on Ser-481.

This sequence belongs to the SUFU family. As to quaternary structure, may form homodimers. Part of a DNA-bound corepressor complex containing SAP18, GLI1 and SIN3. Part of a complex containing CTNNB1. Binds BTRC, GLI2, GLI3, SAP18 and STK36. Binds both free and DNA-bound GLI1. Interacts with KIF7. Interacts with GLI3FL and this interaction regulates the formation of either repressor or activator forms of GLI3. Its association with GLI3FL is regulated by Hh signaling and dissociation of the SUFU-GLI3 interaction requires the presence of the ciliary motor KIF3A. Interacts with ULK3; inactivating the protein kinase activity of ULK3. Interacts with RAB23. Post-translationally, polyubiquitinated at Lys-257 by the SCF(FBXL17) complex, leading to its subsequent degradation and allowing the release of GLI1 for proper hedgehog/smoothened signal transduction. Ubiquitination is impaired by phosphorylation at Ser-342, Ser-346, Ser-352 and Thr-353. In terms of processing, phosphorylation at Ser-342, Ser-346, Ser-352 and Thr-353 prevents ubiquitination by the SCF(FBXL17) complex. As to expression, ubiquitous in adult tissues. Detected in osteoblasts of the perichondrium in the developing limb of 12-week old embryos. Isoform 1 is detected in fetal brain, lung, kidney and testis. Isoform 2 is detected in fetal testis, and at much lower levels in fetal brain, lung and kidney.

It is found in the cytoplasm. It localises to the nucleus. Functionally, negative regulator in the hedgehog/smoothened signaling pathway. Down-regulates GLI1-mediated transactivation of target genes. Down-regulates GLI2-mediated transactivation of target genes. Part of a corepressor complex that acts on DNA-bound GLI1. May also act by linking GLI1 to BTRC and thereby targeting GLI1 to degradation by the proteasome. Sequesters GLI1, GLI2 and GLI3 in the cytoplasm, this effect is overcome by binding of STK36 to both SUFU and a GLI protein. Negative regulator of beta-catenin signaling. Regulates the formation of either the repressor form (GLI3R) or the activator form (GLI3A) of the full-length form of GLI3 (GLI3FL). GLI3FL is complexed with SUFU in the cytoplasm and is maintained in a neutral state. Without the Hh signal, the SUFU-GLI3 complex is recruited to cilia, leading to the efficient processing of GLI3FL into GLI3R. When Hh signaling is initiated, SUFU dissociates from GLI3FL and the latter translocates to the nucleus, where it is phosphorylated, destabilized, and converted to a transcriptional activator (GLI3A). Required for normal embryonic development. Required for the proper formation of hair follicles and the control of epidermal differentiation. In Homo sapiens (Human), this protein is Suppressor of fused homolog.